Here is a 338-residue protein sequence, read N- to C-terminus: Holliday junction branch migration complex subunit RuvB (338 aa).

The large ATPase domain (RuvB-L) stretch occupies residues Met1–Tyr181. ATP contacts are provided by residues Leu20, Arg21, Gly62, Lys65, Thr66, Thr67, Glu128–Phe130, Arg171, Tyr181, and Arg218. Thr66 provides a ligand contact to Mg(2+). The interval Ser182–Gly252 is small ATPAse domain (RuvB-S). The segment at Glu255–Val338 is head domain (RuvB-H). Positions 310 and 315 each coordinate DNA.

Belongs to the RuvB family. Homohexamer. Forms an RuvA(8)-RuvB(12)-Holliday junction (HJ) complex. HJ DNA is sandwiched between 2 RuvA tetramers; dsDNA enters through RuvA and exits via RuvB. An RuvB hexamer assembles on each DNA strand where it exits the tetramer. Each RuvB hexamer is contacted by two RuvA subunits (via domain III) on 2 adjacent RuvB subunits; this complex drives branch migration. In the full resolvosome a probable DNA-RuvA(4)-RuvB(12)-RuvC(2) complex forms which resolves the HJ.

It localises to the cytoplasm. It catalyses the reaction ATP + H2O = ADP + phosphate + H(+). Functionally, the RuvA-RuvB-RuvC complex processes Holliday junction (HJ) DNA during genetic recombination and DNA repair, while the RuvA-RuvB complex plays an important role in the rescue of blocked DNA replication forks via replication fork reversal (RFR). RuvA specifically binds to HJ cruciform DNA, conferring on it an open structure. The RuvB hexamer acts as an ATP-dependent pump, pulling dsDNA into and through the RuvAB complex. RuvB forms 2 homohexamers on either side of HJ DNA bound by 1 or 2 RuvA tetramers; 4 subunits per hexamer contact DNA at a time. Coordinated motions by a converter formed by DNA-disengaged RuvB subunits stimulates ATP hydrolysis and nucleotide exchange. Immobilization of the converter enables RuvB to convert the ATP-contained energy into a lever motion, pulling 2 nucleotides of DNA out of the RuvA tetramer per ATP hydrolyzed, thus driving DNA branch migration. The RuvB motors rotate together with the DNA substrate, which together with the progressing nucleotide cycle form the mechanistic basis for DNA recombination by continuous HJ branch migration. Branch migration allows RuvC to scan DNA until it finds its consensus sequence, where it cleaves and resolves cruciform DNA. The polypeptide is Holliday junction branch migration complex subunit RuvB (Thermoanaerobacter pseudethanolicus (strain ATCC 33223 / 39E) (Clostridium thermohydrosulfuricum)).